Here is a 262-residue protein sequence, read N- to C-terminus: Glucosamine-6-phosphate deaminase (262 aa).

The Proton acceptor; for enolization step role is filled by D63. The active-site For ring-opening step is the N129. The Proton acceptor; for ring-opening step role is filled by H131. The For ring-opening step role is filled by E136.

The protein belongs to the glucosamine/galactosamine-6-phosphate isomerase family. NagB subfamily.

The catalysed reaction is alpha-D-glucosamine 6-phosphate + H2O = beta-D-fructose 6-phosphate + NH4(+). The protein operates within amino-sugar metabolism; N-acetylneuraminate degradation; D-fructose 6-phosphate from N-acetylneuraminate: step 5/5. Functionally, catalyzes the reversible isomerization-deamination of glucosamine 6-phosphate (GlcN6P) to form fructose 6-phosphate (Fru6P) and ammonium ion. The polypeptide is Glucosamine-6-phosphate deaminase (Bacillus cereus (strain B4264)).